A 161-amino-acid polypeptide reads, in one-letter code: Endoribonuclease YbeY (161 aa).

Positions 121, 125, and 131 each coordinate Zn(2+).

The protein belongs to the endoribonuclease YbeY family. Zn(2+) serves as cofactor.

It localises to the cytoplasm. Its function is as follows. Single strand-specific metallo-endoribonuclease involved in late-stage 70S ribosome quality control and in maturation of the 3' terminus of the 16S rRNA. The sequence is that of Endoribonuclease YbeY from Xanthomonas euvesicatoria pv. vesicatoria (strain 85-10) (Xanthomonas campestris pv. vesicatoria).